Here is a 499-residue protein sequence, read N- to C-terminus: Interleukin-17 receptor B (499 aa).

An N-terminal signal peptide occupies residues 1-17 (MLLVLLILAASCRSALP). Residues 18-286 (REPTIQCGSE…PDDNRRMLGG (269 aa)) are Extracellular-facing. N-linked (GlcNAc...) asparagine glycans are attached at residues asparagine 67, asparagine 103, asparagine 156, and asparagine 197. Residues 287–307 (WLPLFLVLLVAVWVLAAGIYL) form a helical membrane-spanning segment. Over 308 to 499 (TWRQGRSTKT…QACHDSCSPL (192 aa)) the chain is Cytoplasmic. An SEFIR domain is found at 328-474 (LIKVLVVYPS…LMKDATAFHT (147 aa)).

In terms of assembly, interacts with DAZAP2. Interacts with TRAF3IP2. Liver and testis. Expressed at lower level in kidney and lung. Expressed in selected T-cell, B-cell and myeloid cell lines.

Its subcellular location is the cell membrane. It localises to the secreted. Functionally, receptor for the pro-inflammatory cytokines IL17B and IL17E. May play a role in controlling the growth and/or differentiation of hematopoietic cells. This is Interleukin-17 receptor B (Il17rb) from Mus musculus (Mouse).